Consider the following 259-residue polypeptide: Small ribosomal subunit protein uS2 (259 aa).

The protein belongs to the universal ribosomal protein uS2 family.

This chain is Small ribosomal subunit protein uS2, found in Dinoroseobacter shibae (strain DSM 16493 / NCIMB 14021 / DFL 12).